Consider the following 347-residue polypeptide: Ferrochelatase (347 aa).

Cys-158 is a [2Fe-2S] cluster binding site. Fe cation-binding residues include His-193 and Glu-272. Residues Cys-332, Cys-339, and Cys-341 each coordinate [2Fe-2S] cluster.

This sequence belongs to the ferrochelatase family. In terms of assembly, homodimer. Requires [2Fe-2S] cluster as cofactor.

The protein localises to the cytoplasm. The catalysed reaction is heme b + 2 H(+) = protoporphyrin IX + Fe(2+). It participates in porphyrin-containing compound metabolism; protoheme biosynthesis; protoheme from protoporphyrin-IX: step 1/1. Catalyzes the ferrous insertion into protoporphyrin IX. The polypeptide is Ferrochelatase (Caulobacter vibrioides (strain ATCC 19089 / CIP 103742 / CB 15) (Caulobacter crescentus)).